Reading from the N-terminus, the 479-residue chain is Galactosylgalactosylxylosylprotein 3-beta-glucuronosyltransferase P (479 aa).

The Cytoplasmic segment spans residues 1–34 (MKGGNYTSLGTCSGINVSGNVAGTRKMSLGKSIK). Residues 35–50 (MYLTIFILTTCIYMAL) traverse the membrane as a helical; Signal-anchor for type II membrane protein segment. Topologically, residues 51–479 (YQYHISREPF…EHIDRLLVRP (429 aa)) are lumenal. N-linked (GlcNAc...) asparagine glycosylation is found at Asn90, Asn97, Asn98, and Asn271. Residues 94 to 120 (NTNNNSTTTSTTTTTAPTTPTTTTTTT) show a composition bias toward low complexity. The disordered stretch occupies residues 94-122 (NTNNNSTTTSTTTTTAPTTPTTTTTTTVG). Asp335 is a binding site for Mn(2+). The Proton acceptor role is filled by Glu418. A glycan (N-linked (GlcNAc...) asparagine) is linked at Asn460.

This sequence belongs to the glycosyltransferase 43 family. It depends on Mn(2+) as a cofactor.

Its subcellular location is the golgi apparatus membrane. The enzyme catalyses 3-O-(beta-D-galactosyl-(1-&gt;3)-beta-D-galactosyl-(1-&gt;4)-beta-D-xylosyl)-L-seryl-[protein] + UDP-alpha-D-glucuronate = 3-O-(beta-D-GlcA-(1-&gt;3)-beta-D-Gal-(1-&gt;3)-beta-D-Gal-(1-&gt;4)-beta-D-Xyl)-L-seryl-[protein] + UDP + H(+). Its pathway is protein modification; protein glycosylation. Functionally, involved in the biosynthesis of L2/HNK-1 carbohydrate epitope on both glycolipids and glycoproteins. Enzyme has a broad specificity. The sequence is that of Galactosylgalactosylxylosylprotein 3-beta-glucuronosyltransferase P (GlcAT-P) from Drosophila melanogaster (Fruit fly).